A 1490-amino-acid chain; its full sequence is Leucine-rich repeat-containing protein 7 (1490 aa).

17 LRR repeats span residues 23–44 (IISV…VFNF), 47–68 (TLEE…LFNC), 70–91 (ALRK…IASL), 93–114 (NLKE…IKCC), 116–137 (CLTI…FTQL), 139–161 (NLTQ…GRLV), 162–183 (KLRI…MHKL), 185–206 (QLER…LDQI), 208–229 (NLRE…IGKL), 231–253 (MLVY…SGCE), 254–275 (ALED…IGLL), 277–298 (KLTT…IGNL), 300–321 (LLEE…IGYL), 323–344 (SLRT…IGSC), 346–367 (NVTV…IGQM), 369–391 (RLRV…TKLK), and 392–413 (ELAA…QTEA). Phosphoserine is present on residues serine 439, serine 441, and serine 443. The span at 663-676 (KKESTDESEVDKTH) shows a compositional bias: basic and acidic residues. 3 disordered regions span residues 663 to 704 (KKES…NTRM), 785 to 807 (AGEN…AHGR), and 822 to 899 (ELEQ…YHDP). Positions 677 to 686 (CLNNSVSSGT) are enriched in polar residues. A compositionally biased stretch (low complexity) spans 687-700 (YSDYSPSQASSASS). The residue at position 831 (threonine 831) is a Phosphothreonine. The residue at position 850 (serine 850) is a Phosphoserine. The span at 859–871 (PSKLETTPTTSPL) shows a compositional bias: low complexity. At threonine 865 the chain carries Phosphothreonine. Position 869 is a phosphoserine (serine 869). The span at 872–882 (PERKDHMKEPT) shows a compositional bias: basic and acidic residues. Phosphoserine is present on residues serine 947, serine 949, and serine 1118. The segment covering 1134–1144 (PHELPPGDRYG) has biased composition (basic and acidic residues). Disordered regions lie at residues 1134-1158 (PHEL…QSSI) and 1196-1218 (QRRP…TRPV). Arginine 1149 is modified (omega-N-methylarginine). The span at 1196 to 1217 (QRRPLSARSYSTESYGASQTRP) shows a compositional bias: polar residues. Serine 1233 carries the post-translational modification Phosphoserine. 2 disordered regions span residues 1238-1265 (GNYG…SCGK) and 1282-1312 (RLDR…PYPL). Residues 1243–1263 (KTSDNSDIKTRPTPVKGEESC) show a composition bias toward basic and acidic residues. The span at 1286 to 1307 (TPSQQSNILDNGQEDVSPSGQW) shows a compositional bias: polar residues. Serine 1288 and serine 1392 each carry phosphoserine. One can recognise a PDZ domain in the interval 1398 to 1488 (EQFCVRIEKN…TVDLVIQREL (91 aa)).

The protein belongs to the LAP (LRR and PDZ) protein family. As to quaternary structure, interacts with CNKSR2 and DLG4. Interacts with CTNND2/Catenin delta-2. Forms a complex with N-cadherin through CTNND2. Interacts with CAMK2A. In terms of tissue distribution, expressed in brain (at protein level).

The protein localises to the cytoplasm. The protein resides in the postsynaptic density. Its function is as follows. Required for normal synaptic spine architecture and function. Necessary for DISC1 and GRM5 localization to postsynaptic density complexes and for both N-methyl D-aspartate receptor-dependent and metabotropic glutamate receptor-dependent long term depression. The chain is Leucine-rich repeat-containing protein 7 (Lrrc7) from Mus musculus (Mouse).